The primary structure comprises 119 residues: Large ribosomal subunit protein uL18 (119 aa).

A disordered region spans residues 1 to 24 (MITKQDKNQVRKKRHARVRSKISG). The segment covering 10–20 (VRKKRHARVRS) has biased composition (basic residues).

It belongs to the universal ribosomal protein uL18 family. Part of the 50S ribosomal subunit; part of the 5S rRNA/L5/L18/L25 subcomplex. Contacts the 5S and 23S rRNAs.

This is one of the proteins that bind and probably mediate the attachment of the 5S RNA into the large ribosomal subunit, where it forms part of the central protuberance. This Lysinibacillus sphaericus (strain C3-41) protein is Large ribosomal subunit protein uL18.